The following is a 378-amino-acid chain: MSHLDNGFRSLTLQRFPATDDVNPLQAWEAADEYLLQQLDDTEIRGPVLILNDAFGALSCALAEHKPYSIGDSYISELATRENLRLNGIDESSVKFLDSTADYPQQPGVVLIKVPKTLALLEQQLRALRKVVTPDTRIIAGAKARDIHTSTLELFEKVLGPTTTTLAWKKARLINCTFNEPPLVDAPQTVSWKLEGTDWTIHNHANVFSRTGLDIGARFFMQHLPENLEGEIVDLGCGNGVIGLTLLDKNPQAKVVFVDESPMAVASSRLNVETNMPEALDRCEFMINNALSGVEPFRFNAVLCNPPFHQQHALTDNVAWEMFHHARRCLKINGELYIVANRHLDYFHKLKKIFGNCTTIATNNKFVVLKAVKLGRRR.

The protein belongs to the methyltransferase superfamily. RlmG family.

Its subcellular location is the cytoplasm. It carries out the reaction guanosine(1835) in 23S rRNA + S-adenosyl-L-methionine = N(2)-methylguanosine(1835) in 23S rRNA + S-adenosyl-L-homocysteine + H(+). Its function is as follows. Specifically methylates the guanine in position 1835 (m2G1835) of 23S rRNA. The chain is Ribosomal RNA large subunit methyltransferase G from Escherichia coli O6:K15:H31 (strain 536 / UPEC).